A 227-amino-acid polypeptide reads, in one-letter code: tRNA (guanine-N(7)-)-methyltransferase (227 aa).

Residues 1 to 21 are disordered; sequence MPDMTMKSQPDRLYGRQRGHA. Residues E54, E79, D114, and D136 each coordinate S-adenosyl-L-methionine. Residue D136 is part of the active site. Residues K140, D172, and 206–209 each bind substrate; that span reads TRYE.

The protein belongs to the class I-like SAM-binding methyltransferase superfamily. TrmB family.

It carries out the reaction guanosine(46) in tRNA + S-adenosyl-L-methionine = N(7)-methylguanosine(46) in tRNA + S-adenosyl-L-homocysteine. The protein operates within tRNA modification; N(7)-methylguanine-tRNA biosynthesis. Functionally, catalyzes the formation of N(7)-methylguanine at position 46 (m7G46) in tRNA. The polypeptide is tRNA (guanine-N(7)-)-methyltransferase (Granulibacter bethesdensis (strain ATCC BAA-1260 / CGDNIH1)).